The sequence spans 348 residues: Phenylalanine--tRNA ligase alpha subunit (348 aa).

Residue glutamate 259 coordinates Mg(2+).

Belongs to the class-II aminoacyl-tRNA synthetase family. Phe-tRNA synthetase alpha subunit type 1 subfamily. In terms of assembly, tetramer of two alpha and two beta subunits. The cofactor is Mg(2+).

Its subcellular location is the cytoplasm. The catalysed reaction is tRNA(Phe) + L-phenylalanine + ATP = L-phenylalanyl-tRNA(Phe) + AMP + diphosphate + H(+). The chain is Phenylalanine--tRNA ligase alpha subunit from Lacticaseibacillus casei (strain BL23) (Lactobacillus casei).